A 430-amino-acid polypeptide reads, in one-letter code: mRNA cap guanine-N(7) methyltransferase (430 aa).

The disordered stretch occupies residues 1-88 (MALRPEKPVW…YDLEERKKKQ (88 aa)). Residues 15–37 (QYDRQYGKLEEPKPPREESKPGD) show a composition bias toward basic and acidic residues. The region spanning 136-419 (SPIIKLRNFN…FYTVFAFRKV (284 aa)) is the mRNA cap 0 methyltransferase domain. Position 145–146 (145–146 (NN)) interacts with mRNA. S-adenosyl-L-methionine is bound by residues K149, G167, D189, D218, Q244, and Y249.

Belongs to the class I-like SAM-binding methyltransferase superfamily. mRNA cap 0 methyltransferase family.

Its subcellular location is the nucleus. The enzyme catalyses a 5'-end (5'-triphosphoguanosine)-ribonucleoside in mRNA + S-adenosyl-L-methionine = a 5'-end (N(7)-methyl 5'-triphosphoguanosine)-ribonucleoside in mRNA + S-adenosyl-L-homocysteine. Responsible for methylating the 5'-cap structure of mRNAs. The polypeptide is mRNA cap guanine-N(7) methyltransferase (ABD1) (Eremothecium gossypii (strain ATCC 10895 / CBS 109.51 / FGSC 9923 / NRRL Y-1056) (Yeast)).